The primary structure comprises 185 residues: Riboflavin kinase (185 aa).

Residues threonine 41 and asparagine 43 each contribute to the Mg(2+) site. The active-site Nucleophile is the glutamate 122.

It belongs to the flavokinase family. Zn(2+) is required as a cofactor. Mg(2+) serves as cofactor.

It carries out the reaction riboflavin + ATP = FMN + ADP + H(+). It participates in cofactor biosynthesis; FMN biosynthesis; FMN from riboflavin (ATP route): step 1/1. In terms of biological role, catalyzes the phosphorylation of riboflavin (vitamin B2) to form flavin mononucleotide (FMN) coenzyme. The polypeptide is Riboflavin kinase (FMN1) (Kluyveromyces lactis (strain ATCC 8585 / CBS 2359 / DSM 70799 / NBRC 1267 / NRRL Y-1140 / WM37) (Yeast)).